Consider the following 353-residue polypeptide: Mas-related G-protein coupled receptor member B5 (353 aa).

Topologically, residues 1 to 67 (MPDSPTESYG…SCIITFNTLN (67 aa)) are extracellular. N-linked (GlcNAc...) asparagine glycosylation is found at Asn26 and Asn44. Residues 68-90 (FLTATISVVGTAGNATVLRLLGF) form a helical membrane-spanning segment. The Cytoplasmic segment spans residues 91-96 (HMHRYA). Residues 97–117 (FSVYVFNLAGADFLYLCTQTV) traverse the membrane as a helical segment. At 118–131 (YSLECVLQFDNSYF) the chain is on the extracellular side. The helical transmembrane segment at 132 to 152 (YFLLTILMFAYLAALCMIPAI) threads the bilayer. Over 153-180 (STERCLSVTWPIWYHCQRPRHTSATVCA) the chain is Cytoplasmic. Residues 181 to 201 (LFWAFSLLLRLLLGQGCGFLF) form a helical membrane-spanning segment. At 202–213 (GKYDYYFCRYCS) the chain is on the extracellular side. Residues 214–234 (FITTAFLIVLFVVPFVSSLAM) traverse the membrane as a helical segment. Topologically, residues 235 to 253 (LTKIICGSHRIPVTRFYVT) are cytoplasmic. A helical transmembrane segment spans residues 254–274 (IAVTVLVFTFFGLPVGIISLL). At 275-289 (LPRIVVFRGVFYIYK) the chain is on the extracellular side. Residues 290-310 (IVTFLYSVNCCANPIIYFLIG) form a helical membrane-spanning segment. The Cytoplasmic segment spans residues 311 to 353 (SIRHHRLQRQSLKLLLQRAMQDTPEEEGGVKGPSQKSNELEIV). The disordered stretch occupies residues 333–353 (TPEEEGGVKGPSQKSNELEIV).

Belongs to the G-protein coupled receptor 1 family. Mas subfamily. In terms of tissue distribution, expressed strongly in newborn dorsal root ganglia, adult dorsal root ganglia and trigeminal ganlia.

It is found in the membrane. Orphan receptor. Probably involved in the function of nociceptive neurons. May regulate nociceptor function and/or development, including the sensation or modulation of pain. The chain is Mas-related G-protein coupled receptor member B5 (Mrgprb5) from Rattus norvegicus (Rat).